Here is a 291-residue protein sequence, read N- to C-terminus: Nucleotide-binding protein CMM_1747 (291 aa).

ATP is bound at residue 15-22 (GMSGAGRS). Position 66-69 (66-69 (DVRG)) interacts with GTP.

The protein belongs to the RapZ-like family.

Displays ATPase and GTPase activities. The polypeptide is Nucleotide-binding protein CMM_1747 (Clavibacter michiganensis subsp. michiganensis (strain NCPPB 382)).